We begin with the raw amino-acid sequence, 158 residues long: 18.1 kDa class I heat shock protein (158 aa).

The region spanning 44 to 158 is the sHSP domain; the sequence is ENPAFVSTRV…AEVKSIEISG (115 aa).

This sequence belongs to the small heat shock protein (HSP20) family. As to quaternary structure, forms oligomeric structures.

The protein resides in the cytoplasm. This is 18.1 kDa class I heat shock protein (HSP18.1) from Pisum sativum (Garden pea).